The primary structure comprises 422 residues: MNPSCVVYVGNIPYEMAEEQVIDIFKQSGPVKSFQLVIDPESGQPKGYGFCEYHDPATAASAVRNLNNYDAGTRRLRVDFPTADQIRRLDKLLGPSRYGYYPQSYANQSYTYGNNFGSYPPTQPSTQPLPQSYGYPSYPPAGYRGGSARPSGVLANDEVYRVLAQLAPNEIDYMLSAIKALCLEAPEQAAQLFETNPQLSYAVFQAMLMKRYTSESVVADLLIPAGVNLPGAQEPNRGYFSPMHTYSSAVPGPISVPSAPYGRASSTIAEVSPMYGSHAAPYASTPSAAVGSSRGSTPASATVPISPARGFPTTSAYNPAPPAYGMANPAYGSTGIRSSSIPSSGSIRSPSLTTTSAQATTNATNNITTTTAAQDENATKAALIAQLMALTDDQINVLPPDQKERILQIRQALPSSYKTESK.

Positions 5 to 83 constitute an RRM domain; that stretch reads CVVYVGNIPY…RRLRVDFPTA (79 aa). The disordered stretch occupies residues 337 to 358; that stretch reads RSSSIPSSGSIRSPSLTTTSAQ.

Its subcellular location is the nucleus. This is an uncharacterized protein from Schizosaccharomyces pombe (strain 972 / ATCC 24843) (Fission yeast).